Consider the following 75-residue polypeptide: CDC42 small effector protein 2-B (75 aa).

Residues cysteine 10 and cysteine 11 are each lipidated (S-palmitoyl cysteine). In terms of domain architecture, CRIB spans 29–42 (IGEPMNFVHTAHVG).

The protein belongs to the CDC42SE/SPEC family.

It localises to the cytoplasm. It is found in the cytoskeleton. The protein localises to the cell membrane. Functionally, probably involved in the organization of the actin cytoskeleton by acting downstream of CDC42, inducing actin filament assembly. The chain is CDC42 small effector protein 2-B (cdc42se2-b) from Xenopus laevis (African clawed frog).